We begin with the raw amino-acid sequence, 424 residues long: MSYVIDRRLNGKNKSTVNRQRFLRRYRDHIKKAVEEAVSRRSITDMEHGEQISIPGRDIDEPVLHHGRGGKQTIVHPGNKEFTAGERIPRPSGGGGGGSGSGKASNSGEGIDDFVFQITQEEFLDFMFEDLELPNLVKRHITGADTFKTVRAGISSEGNPSRINIVRTLRSAHARRIALSGNSRAKLREAKAELERLKIEEPDNFGDIQKLEAEITRLRMRIERVPYLDTFDLKYNLLVKQPNPSSKAVMFCLMDVSGSMTQATKDIAKRFFILLYLFLKRSYDKIDVVFIRHHTSAKEVDEEEFFYSRETGGTIVSSALKMMQEVMVERYPLNEWNIYAAQASDGDNWNDDSPICRDILIKQIMPFVQYYSYVEITPREHQALWYEYESVREAFPDSFAQQQIVSAADIYPVFRELFQRRLAT.

A disordered region spans residues 57 to 108 (RDIDEPVLHHGRGGKQTIVHPGNKEFTAGERIPRPSGGGGGGSGSGKASNSG). Residues 92-101 (SGGGGGGSGS) show a composition bias toward gly residues.

Belongs to the UPF0229 family.

The sequence is that of UPF0229 protein Avin_46880 from Azotobacter vinelandii (strain DJ / ATCC BAA-1303).